The sequence spans 527 residues: Rhesus-like glycoprotein A (527 aa).

Topologically, residues 1 to 18 (MTHNDDDHKWVTTKRKEP) are cytoplasmic. The chain crosses the membrane as a helical span at residues 19–39 (IFFTVILFIFQIFMIICFAAL). Residues 40–70 (TGYDTNKNYTGSENPDEFKGGEVQERVNNFY) lie on the Extracellular side of the membrane. A glycan (N-linked (GlcNAc...) asparagine) is linked at Asn-47. A helical membrane pass occupies residues 71-91 (GYFRDINIMIFFGFGFLMTFL). Over 92 to 99 (RRYGYSAL) the chain is Cytoplasmic. A helical transmembrane segment spans residues 100–120 (GYTFIISALVSQWSVLLNGFF). Residues 121 to 141 (EAWSHSNKHGEFPSTWEFSMD) lie on the Extracellular side of the membrane. A helical transmembrane segment spans residues 142-162 (SLLQGFFCSGSVMISYGAILG). The Cytoplasmic segment spans residues 163–166 (RVTP). The helical transmembrane segment at 167–187 (LHMLIMGIIEPIFFFLNVFIG) threads the bilayer. Residues 188 to 195 (EMNLEAID) are Extracellular-facing. A helical membrane pass occupies residues 196–216 (VGGGMYIHLFGSVFGLTVAWF). Residues 217–236 (LTDRKSKECTDNAPSYSGDN) are Cytoplasmic-facing. A helical transmembrane segment spans residues 237–257 (FAMAGTLFLWMMWPSFNAAIA). Topologically, residues 258–263 (PLGEPQ) are extracellular. The chain crosses the membrane as a helical span at residues 264–284 (FRAIANTFLSLTGSTVATFIV). At 285-299 (SRLFSHLGNKLDMVH) the chain is on the cytoplasmic side. The helical transmembrane segment at 300-319 (VQNSSLAGGVVQGCIAHMNI) threads the bilayer. The Extracellular portion of the chain corresponds to 320–321 (NP). Residues 322–342 (GGAIAMGFIAGTISVCGYLFI) form a helical membrane-spanning segment. The Cytoplasmic segment spans residues 343 to 357 (TPKVQRKLHIQDTCG). A helical membrane pass occupies residues 358–378 (ILNLHCIPGFLGSIAAIFAAI). Residues 379 to 406 (KGLNNPNMYSKVEFEQIFRAGDSQASAN) are Extracellular-facing. A helical transmembrane segment spans residues 407 to 427 (LIATMVSIGLGIVGGLLVGVI). Over 428–527 (LLQLKKIKGL…EEDEFKQEPI (100 aa)) the chain is Cytoplasmic. Residues 471–527 (SEDTAGGDDEEEGVGKEHGAVEMGKHNRIVQPKQDNKYHKQLPSDDEEEDEFKQEPI) form a disordered region. Basic and acidic residues predominate over residues 483 to 495 (GVGKEHGAVEMGK). Over residues 514–527 (SDDEEEDEFKQEPI) the composition is skewed to acidic residues.

It belongs to the ammonium transporter (TC 2.A.49) family. Rh subfamily. Interacts with ap1g1.

The protein localises to the contractile vacuole. It localises to the membrane. Its function is as follows. May be a carbon dioxide/bicarbonate transporter. The protein is Rhesus-like glycoprotein A (rhgA) of Dictyostelium discoideum (Social amoeba).